The sequence spans 336 residues: Protein-glutamate methylesterase/protein-glutamine glutaminase 3 (336 aa).

The Response regulatory domain occupies 2 to 119 (KIAIVNDMPM…PNPREAAAPL (118 aa)). A 4-aspartylphosphate modification is found at D53. One can recognise a CheB-type methylesterase domain in the interval 147–336 (VSRRDRLVAI…APRLMEVFTQ (190 aa)). Residues S159, H186, and D279 contribute to the active site.

It belongs to the CheB family. Phosphorylated by CheA. Phosphorylation of the N-terminal regulatory domain activates the methylesterase activity.

It localises to the cytoplasm. The enzyme catalyses [protein]-L-glutamate 5-O-methyl ester + H2O = L-glutamyl-[protein] + methanol + H(+). It catalyses the reaction L-glutaminyl-[protein] + H2O = L-glutamyl-[protein] + NH4(+). Its function is as follows. Involved in chemotaxis. Part of a chemotaxis signal transduction system that modulates chemotaxis in response to various stimuli. Catalyzes the demethylation of specific methylglutamate residues introduced into the chemoreceptors (methyl-accepting chemotaxis proteins or MCP) by CheR. Also mediates the irreversible deamidation of specific glutamine residues to glutamic acid. This chain is Protein-glutamate methylesterase/protein-glutamine glutaminase 3, found in Pseudomonas syringae pv. tomato (strain ATCC BAA-871 / DC3000).